A 142-amino-acid polypeptide reads, in one-letter code: Large ribosomal subunit protein uL11 (142 aa).

Belongs to the universal ribosomal protein uL11 family. As to quaternary structure, part of the ribosomal stalk of the 50S ribosomal subunit. Interacts with L10 and the large rRNA to form the base of the stalk. L10 forms an elongated spine to which L12 dimers bind in a sequential fashion forming a multimeric L10(L12)X complex. One or more lysine residues are methylated.

Its function is as follows. Forms part of the ribosomal stalk which helps the ribosome interact with GTP-bound translation factors. This Rhodospirillum rubrum (strain ATCC 11170 / ATH 1.1.1 / DSM 467 / LMG 4362 / NCIMB 8255 / S1) protein is Large ribosomal subunit protein uL11.